Here is a 103-residue protein sequence, read N- to C-terminus: Small ribosomal subunit protein uS10 (103 aa).

It belongs to the universal ribosomal protein uS10 family. As to quaternary structure, part of the 30S ribosomal subunit.

Its function is as follows. Involved in the binding of tRNA to the ribosomes. The chain is Small ribosomal subunit protein uS10 from Polynucleobacter necessarius subsp. necessarius (strain STIR1).